The primary structure comprises 322 residues: Anthranilate phosphoribosyltransferase (322 aa).

Residues Gly71, 74-75 (GD), Thr79, 81-84 (NVST), 99-107 (KFGNRSASG), and Ala111 contribute to the 5-phospho-alpha-D-ribose 1-diphosphate site. Gly71 is an anthranilate binding site. A Mg(2+)-binding site is contributed by Ser83. Asn102 serves as a coordination point for anthranilate. Residue Arg157 coordinates anthranilate. Residues Asp215 and Glu216 each contribute to the Mg(2+) site.

It belongs to the anthranilate phosphoribosyltransferase family. Homodimer. Mg(2+) is required as a cofactor.

The enzyme catalyses N-(5-phospho-beta-D-ribosyl)anthranilate + diphosphate = 5-phospho-alpha-D-ribose 1-diphosphate + anthranilate. The protein operates within amino-acid biosynthesis; L-tryptophan biosynthesis; L-tryptophan from chorismate: step 2/5. Functionally, catalyzes the transfer of the phosphoribosyl group of 5-phosphorylribose-1-pyrophosphate (PRPP) to anthranilate to yield N-(5'-phosphoribosyl)-anthranilate (PRA). This Thermoplasma acidophilum (strain ATCC 25905 / DSM 1728 / JCM 9062 / NBRC 15155 / AMRC-C165) protein is Anthranilate phosphoribosyltransferase.